The following is a 156-amino-acid chain: Protein-export protein SecB (156 aa).

The protein belongs to the SecB family. Homotetramer, a dimer of dimers. One homotetramer interacts with 1 SecA dimer.

Its subcellular location is the cytoplasm. One of the proteins required for the normal export of preproteins out of the cell cytoplasm. It is a molecular chaperone that binds to a subset of precursor proteins, maintaining them in a translocation-competent state. It also specifically binds to its receptor SecA. The polypeptide is Protein-export protein SecB (Xanthobacter autotrophicus (strain ATCC BAA-1158 / Py2)).